The sequence spans 329 residues: Replication factor C small subunit (329 aa).

51–58 is an ATP binding site; sequence GPPGTGKT.

It belongs to the activator 1 small subunits family. RfcS subfamily. In terms of assembly, heteromultimer composed of small subunits (RfcS) and large subunits (RfcL).

Functionally, part of the RFC clamp loader complex which loads the PCNA sliding clamp onto DNA. This chain is Replication factor C small subunit, found in Staphylothermus marinus (strain ATCC 43588 / DSM 3639 / JCM 9404 / F1).